A 297-amino-acid chain; its full sequence is 4-hydroxy-tetrahydrodipicolinate synthase (297 aa).

T46 is a pyruvate binding site. Y134 acts as the Proton donor/acceptor in catalysis. The active-site Schiff-base intermediate with substrate is K162. I209 is a binding site for pyruvate.

It belongs to the DapA family. In terms of assembly, homotetramer; dimer of dimers.

Its subcellular location is the cytoplasm. It carries out the reaction L-aspartate 4-semialdehyde + pyruvate = (2S,4S)-4-hydroxy-2,3,4,5-tetrahydrodipicolinate + H2O + H(+). The protein operates within amino-acid biosynthesis; L-lysine biosynthesis via DAP pathway; (S)-tetrahydrodipicolinate from L-aspartate: step 3/4. Its function is as follows. Catalyzes the condensation of (S)-aspartate-beta-semialdehyde [(S)-ASA] and pyruvate to 4-hydroxy-tetrahydrodipicolinate (HTPA). The chain is 4-hydroxy-tetrahydrodipicolinate synthase from Methanosphaera stadtmanae (strain ATCC 43021 / DSM 3091 / JCM 11832 / MCB-3).